Here is a 644-residue protein sequence, read N- to C-terminus: Biosynthetic arginine decarboxylase (644 aa).

K100 is modified (N6-(pyridoxal phosphate)lysine). A substrate-binding site is contributed by C282–Y292.

The protein belongs to the Orn/Lys/Arg decarboxylase class-II family. SpeA subfamily. Mg(2+) serves as cofactor. It depends on pyridoxal 5'-phosphate as a cofactor.

The enzyme catalyses L-arginine + H(+) = agmatine + CO2. Functionally, catalyzes the biosynthesis of agmatine from arginine. In Gloeobacter violaceus (strain ATCC 29082 / PCC 7421), this protein is Biosynthetic arginine decarboxylase.